The following is a 143-amino-acid chain: Photosystem II extrinsic protein U (143 aa).

The N-terminal stretch at 1 to 29 (MKRLVGVLMILGLMLTSWGLLGSPQTAIA) is a signal peptide. The propeptide occupies 30-44 (ASLSPLSFNPSPVLA).

This sequence belongs to the PsbU family. As to quaternary structure, PSII is composed of 1 copy each of membrane proteins PsbA, PsbB, PsbC, PsbD, PsbE, PsbF, PsbH, PsbI, PsbJ, PsbK, PsbL, PsbM, PsbT, PsbX, PsbY, PsbZ, Psb30/Ycf12, peripheral proteins PsbO, CyanoQ (PsbQ), PsbU, PsbV and a large number of cofactors. It forms dimeric complexes.

The protein resides in the cellular thylakoid membrane. In terms of biological role, one of the extrinsic, lumenal subunits of photosystem II (PSII). PSII is a light-driven water plastoquinone oxidoreductase, using light energy to abstract electrons from H(2)O, generating a proton gradient subsequently used for ATP formation. The extrinsic proteins stabilize the structure of photosystem II oxygen-evolving complex (OEC), the ion environment of oxygen evolution and protect the OEC against heat-induced inactivation. The chain is Photosystem II extrinsic protein U from Leptolyngbya laminosa (Phormidium laminosum).